Reading from the N-terminus, the 293-residue chain is Deubiquitinase OTUD6B (293 aa).

Met1 is modified (N-acetylmethionine). The OTU domain maps to 147-284; that stretch reads LEIKQIPSDG…GEHYNSVTRL (138 aa). Residues 152–158 form a cys-loop region; sequence IPSDGHC. Residue Asp155 is part of the active site. The active-site Nucleophile is the Cys158. Positions 219 to 229 are variable-loop; that stretch reads IVNTAAWGGQL. A his-loop region spans residues 267 to 277; the sequence is YMRHAYGLGEH. Residue His277 is part of the active site.

Interacts with the eukaryotic translation initiation factor 4F complex.

It carries out the reaction Thiol-dependent hydrolysis of ester, thioester, amide, peptide and isopeptide bonds formed by the C-terminal Gly of ubiquitin (a 76-residue protein attached to proteins as an intracellular targeting signal).. Deubiquitinating enzyme that may play a role in the ubiquitin-dependent regulation of protein synthesis, downstream of mTORC1. May associate with the protein synthesis initiation complex and modify its ubiquitination to repress translation. May also repress DNA synthesis and modify different cellular targets thereby regulating cell growth and proliferation. May also play a role in proteasome assembly and function. Its function is as follows. Stimulates protein synthesis. Influences the expression of CCND1/cyclin D1 by promoting its translation and regulates MYC/c-Myc protein stability. The sequence is that of Deubiquitinase OTUD6B from Homo sapiens (Human).